A 606-amino-acid chain; its full sequence is Ubiquitin carboxyl-terminal hydrolase 2 (606 aa).

Residues 1 to 201 (MSQLSSTLKR…RSEYLADYLE (201 aa)) are necessary for interaction with MDM4. Disordered stretches follow at residues 53–112 (PSPP…GGSG) and 207–228 (ASAP…LSPT). The span at 90–100 (KRAESQTRGTE) shows a compositional bias: basic and acidic residues. The USP domain maps to 268-600 (AGLRNLGNTC…DAYLLFYELA (333 aa)). Residue Cys277 is the Nucleophile of the active site. Residues 404–504 (YLEREDSRIG…FPKILVLHLK (101 aa)) form a necessary for interaction with MDM4 region. The Zn(2+) site is built by Cys426, Cys429, Cys477, and Cys480. The active-site Proton acceptor is His558.

Belongs to the peptidase C19 family. USP2 subfamily. Homooligomer. Found in trimeric complex with MDM2 and MDM4 and USP2. Interacts with CCND1; the interaction is direct and promotes its stabilization by antagonizing ubiquitin-dependent degradation. Interacts (via N-terminus and C-terminus) with MDM2. Interacts with MDM4 and PER1. Interacts with KCNQ1; counteracts the NEDD4L-specific down-regulation of I(Ks) and restores plasma membrane localization of KCNQ1.

It localises to the cytoplasm. The protein localises to the perinuclear region. The enzyme catalyses Thiol-dependent hydrolysis of ester, thioester, amide, peptide and isopeptide bonds formed by the C-terminal Gly of ubiquitin (a 76-residue protein attached to proteins as an intracellular targeting signal).. Cleavage is inhibited by ubiquitin in a dosage-dependent manner. Cleavage is blocked by ubiquitin aldehyde. Functionally, hydrolase that deubiquitinates polyubiquitinated target proteins such as MDM2, MDM4 and CCND1. Possesses both ubiquitin-specific peptidase and isopeptidase activities. Deubiquitinates MDM2 without reversing MDM2-mediated p53/TP53 ubiquitination and thus indirectly promotes p53/TP53 degradation and limits p53 activity. Has no deubiquitinase activity against p53/TP53. Prevents MDM2-mediated degradation of MDM4. Plays a role in the G1/S cell-cycle progression in normal and cancer cells. Plays a role in the regulation of myogenic differentiation of embryonic muscle cells. Regulates the circadian clock by modulating its intrinsic circadian rhythm and its capacity to respond to external cues. Associates with clock proteins and deubiquitinates core clock component PER1 but does not affect its overall stability. Regulates the nucleocytoplasmic shuttling and nuclear retention of PER1 and its repressive role on the clock transcription factors CLOCK and BMAL1. The chain is Ubiquitin carboxyl-terminal hydrolase 2 (USP2) from Bos taurus (Bovine).